Reading from the N-terminus, the 124-residue chain is Small ribosomal subunit protein bS6 (124 aa).

The disordered stretch occupies residues 98 to 124 (EASPMLKAREERPRREDVREEAEEAAE). Residues 104–115 (KAREERPRREDV) show a composition bias toward basic and acidic residues.

The protein belongs to the bacterial ribosomal protein bS6 family.

Binds together with bS18 to 16S ribosomal RNA. This is Small ribosomal subunit protein bS6 from Tolumonas auensis (strain DSM 9187 / NBRC 110442 / TA 4).